The primary structure comprises 157 residues: uncharacterized protein (157 aa).

The N-terminal stretch at 1–30 (MLPEQGPQPSTMPLWCLLAACTSLPRQAAT) is a signal peptide.

The protein localises to the secreted. This is an uncharacterized protein from Homo sapiens (Human).